Consider the following 226-residue polypeptide: HTH-type transcriptional regulator Rv0324 (226 aa).

An HTH arsR-type domain is found at 7–101 (RKAALLDQVA…LVQVVADEHL (95 aa)). Residues 41-64 (VEAIATATGMNLTTASANLQALKS) constitute a DNA-binding region (H-T-H motif). The Rhodanese domain maps to 129-218 (EAGEVTLVDV…WRLAGLPVDE (90 aa)). Cys-177 (cysteine persulfide intermediate) is an active-site residue.

Its function is as follows. Part of a regulatory network that coordinates tolerance to the antitubercular drug bedaquiline. The chain is HTH-type transcriptional regulator Rv0324 from Mycobacterium tuberculosis (strain ATCC 25618 / H37Rv).